Consider the following 129-residue polypeptide: Small ribosomal subunit protein uS11c (129 aa).

The protein belongs to the universal ribosomal protein uS11 family. Part of the 30S ribosomal subunit.

Its subcellular location is the plastid. The protein resides in the chloroplast. The protein is Small ribosomal subunit protein uS11c of Oltmannsiellopsis viridis (Marine flagellate).